The chain runs to 699 residues: Elongation factor G (699 aa).

In terms of domain architecture, tr-type G spans Glu-8–Ile-283. GTP is bound by residues Ala-17–Thr-24, Asp-81–His-85, and Asn-135–Asp-138.

Belongs to the TRAFAC class translation factor GTPase superfamily. Classic translation factor GTPase family. EF-G/EF-2 subfamily.

The protein resides in the cytoplasm. In terms of biological role, catalyzes the GTP-dependent ribosomal translocation step during translation elongation. During this step, the ribosome changes from the pre-translocational (PRE) to the post-translocational (POST) state as the newly formed A-site-bound peptidyl-tRNA and P-site-bound deacylated tRNA move to the P and E sites, respectively. Catalyzes the coordinated movement of the two tRNA molecules, the mRNA and conformational changes in the ribosome. The protein is Elongation factor G of Rickettsia akari (strain Hartford).